Here is a 117-residue protein sequence, read N- to C-terminus: Large ribosomal subunit protein bL19 (117 aa).

The protein belongs to the bacterial ribosomal protein bL19 family.

Functionally, this protein is located at the 30S-50S ribosomal subunit interface and may play a role in the structure and function of the aminoacyl-tRNA binding site. This chain is Large ribosomal subunit protein bL19, found in Vibrio vulnificus (strain CMCP6).